Reading from the N-terminus, the 442-residue chain is Transcription factor AP-2-epsilon (442 aa).

A PPxY motif motif is present at residues 54 to 59 (YFPPPY). Residue Ser-246 is modified to Phosphoserine; by PKA. Positions 287–417 (RRKAANVTLL…YLLESLKGLD (131 aa)) are H-S-H (helix-span-helix), dimerization.

It belongs to the AP-2 family. Binds DNA as a dimer. Can form homodimers or heterodimers with other AP-2 family members. As to expression, expressed in skin, primary keratinocytes, immortalized keratinocytes, and HeLa cell line.

It localises to the nucleus. In terms of biological role, sequence-specific DNA-binding protein that interacts with inducible viral and cellular enhancer elements to regulate transcription of selected genes. AP-2 factors bind to the consensus sequence 5'-GCCNNNGGC-3' and activate genes involved in a large spectrum of important biological functions including proper eye, face, body wall, limb and neural tube development. They also suppress a number of genes including MCAM/MUC18, C/EBP alpha and MYC. AP-2-epsilon may play a role in the development of the CNS and in cartilage differentiation. This is Transcription factor AP-2-epsilon from Homo sapiens (Human).